The chain runs to 350 residues: 4-hydroxy-2-oxovalerate aldolase 3 (350 aa).

Residues 13 to 265 (VVFHDMCLRD…DTGVDLFRLM (253 aa)) form the Pyruvate carboxyltransferase domain. 21–22 (RD) serves as a coordination point for substrate. Asp22 is a Mn(2+) binding site. His25 (proton acceptor) is an active-site residue. Substrate-binding residues include Ser175 and His204. His204 and His206 together coordinate Mn(2+). Residue Tyr295 coordinates substrate.

It belongs to the 4-hydroxy-2-oxovalerate aldolase family.

It catalyses the reaction (S)-4-hydroxy-2-oxopentanoate = acetaldehyde + pyruvate. The protein is 4-hydroxy-2-oxovalerate aldolase 3 (lapG) of Azotobacter vinelandii (strain DJ / ATCC BAA-1303).